The following is a 419-amino-acid chain: AT-rich binding protein (419 aa).

The C2H2-type 1 zinc-finger motif lies at 29 to 52 (IVCHTCQEELQTQDAFWKHIQDEH). The disordered stretch occupies residues 121-179 (LHEAQHQQQQQQQQHQQQQQQQQHQQQQQHQHHQHQQQQQHLHQQQQQQQQQQRDAAKE). 2 stretches are compositionally biased toward low complexity: residues 126–149 (HQQQ…QQQQ) and 156–173 (QQQQ…QQQQ). 2 C2H2-type zinc fingers span residues 352 to 376 (YVCD…RVVH) and 382 to 405 (FNCD…KKKH).

Its subcellular location is the nucleus. Its function is as follows. May be a transcription factor for genes having (A+T) stretches in their promoter and/or enhancer regions. Binds to AT rich DNA. The chain is AT-rich binding protein from Drosophila grimshawi (Hawaiian fruit fly).